The sequence spans 922 residues: Pyruvate dehydrogenase E1 component (922 aa).

As to quaternary structure, homodimer. Part of an unusual ODH/PDH supercomplex, consisting of AceE (E1), AceF (E2), and Lpd (E3) together with OdhA (E1+E2). Requires Mg(2+) as cofactor. Thiamine diphosphate is required as a cofactor.

It carries out the reaction N(6)-[(R)-lipoyl]-L-lysyl-[protein] + pyruvate + H(+) = N(6)-[(R)-S(8)-acetyldihydrolipoyl]-L-lysyl-[protein] + CO2. In terms of biological role, is a specific component of the pyruvate dehydrogenase (PDH) complex, that catalyzes the overall conversion of pyruvate to acetyl-CoA and CO(2). AceE has reductase activity with pyruvate but does not react with 2-oxoglutarate. This chain is Pyruvate dehydrogenase E1 component (aceE), found in Corynebacterium glutamicum (strain ATCC 13032 / DSM 20300 / JCM 1318 / BCRC 11384 / CCUG 27702 / LMG 3730 / NBRC 12168 / NCIMB 10025 / NRRL B-2784 / 534).